Reading from the N-terminus, the 210-residue chain is HTH-type transcriptional regulator TtgR (210 aa).

Positions 10–70 (QETRAQIIEA…ALLDSLHETH (61 aa)) constitute an HTH tetR-type domain. The segment at residues 33-52 (TLADIAELAGVTRGAIYWHF) is a DNA-binding region (H-T-H motif).

As to quaternary structure, homodimer.

Functionally, represses expression from the ttgABC operon promoter and its own expression. Binds to a promoter region between the divergently transcribed ttgR and ttgABC genes/operons; in the presence of chloramphenicol or tetracycline this binding no longer occurs and ttgR and ttgABC are derepressed. This suggests that TtgR binds these antibiotics. The protein is HTH-type transcriptional regulator TtgR (ttgR) of Pseudomonas putida (strain DOT-T1E).